Consider the following 432-residue polypeptide: Glutamate--cysteine ligase EgtA (432 aa).

This sequence belongs to the glutamate--cysteine ligase type 2 family. EgtA subfamily.

The enzyme catalyses L-cysteine + L-glutamate + ATP = gamma-L-glutamyl-L-cysteine + ADP + phosphate + H(+). Its pathway is amino-acid biosynthesis; ergothioneine biosynthesis. Catalyzes the synthesis of gamma-glutamylcysteine (gamma-GC) which is used as substrate for the biosynthesis of the low-molecular thiol compound ergothioneine (ERG). ERG is one of the major redox buffers which protects bacteria against redox stressors and antibiotics; loss of ERG or mycothiol (MSH, the other major redox buffer in this bacteria) leads to respiratory alterations and bioenergetic deficiencies that negatively impact virulence. The sequence is that of Glutamate--cysteine ligase EgtA (egtA) from Mycobacterium tuberculosis (strain CDC 1551 / Oshkosh).